Reading from the N-terminus, the 47-residue chain is Photosystem II reaction center protein K (47 aa).

Residues 1 to 10 (MAAFTLDLMA) constitute a propeptide that is removed on maturation. Residues 20–40 (APAVDVLPLIPIFFFLLVFVW) traverse the membrane as a helical segment.

The protein belongs to the PsbK family. In terms of assembly, PSII is composed of 1 copy each of membrane proteins PsbA, PsbB, PsbC, PsbD, PsbE, PsbF, PsbH, PsbI, PsbJ, PsbK, PsbL, PsbM, PsbT, PsbX, PsbY, Psb30/Ycf12, peripheral proteins PsbO, CyanoQ (PsbQ), PsbU, PsbV and a large number of cofactors. It forms dimeric complexes.

The protein resides in the cellular thylakoid membrane. Its function is as follows. One of the components of the core complex of photosystem II (PSII). PSII is a light-driven water:plastoquinone oxidoreductase that uses light energy to abstract electrons from H(2)O, generating O(2) and a proton gradient subsequently used for ATP formation. It consists of a core antenna complex that captures photons, and an electron transfer chain that converts photonic excitation into a charge separation. This chain is Photosystem II reaction center protein K, found in Prochlorococcus marinus (strain MIT 9303).